The primary structure comprises 104 residues: Small ribosomal subunit protein bS6 (104 aa).

It belongs to the bacterial ribosomal protein bS6 family.

In terms of biological role, binds together with bS18 to 16S ribosomal RNA. This is Small ribosomal subunit protein bS6 from Elusimicrobium minutum (strain Pei191).